The following is a 444-amino-acid chain: Tubulin beta 8B (444 aa).

The MREI motif motif lies at 1 to 4 (MREI). Residues glutamine 11, glutamate 69, serine 138, glycine 142, threonine 143, and glycine 144 each contribute to the GTP site. Glutamate 69 serves as a coordination point for Mg(2+). Position 172 is a phosphoserine; by CDK1 (serine 172). GTP contacts are provided by asparagine 204 and asparagine 226. The segment at 421–444 (EYQQYQDATAEEEEDEEYAEEEVA) is disordered. Positions 429 to 444 (TAEEEEDEEYAEEEVA) are enriched in acidic residues. The residue at position 436 (glutamate 436) is a 5-glutamyl polyglutamate.

Belongs to the tubulin family. As to quaternary structure, dimer of alpha and beta chains. A typical microtubule is a hollow water-filled tube with an outer diameter of 25 nm and an inner diameter of 15 nM. Alpha-beta heterodimers associate head-to-tail to form protofilaments running lengthwise along the microtubule wall with the beta-tubulin subunit facing the microtubule plus end conferring a structural polarity. Microtubules usually have 13 protofilaments but different protofilament numbers can be found in some organisms and specialized cells. Requires Mg(2+) as cofactor. Post-translationally, some glutamate residues at the C-terminus are polyglutamylated, resulting in polyglutamate chains on the gamma-carboxyl group. Polyglutamylation plays a key role in microtubule severing by spastin (SPAST). SPAST preferentially recognizes and acts on microtubules decorated with short polyglutamate tails: severing activity by SPAST increases as the number of glutamates per tubulin rises from one to eight, but decreases beyond this glutamylation threshold. Glutamylation is also involved in cilia motility. In terms of processing, some glutamate residues at the C-terminus are monoglycylated but not polyglycylated due to the absence of functional TTLL10 in human. Monoglycylation is mainly limited to tubulin incorporated into cilia and flagella axonemes, which is required for their stability and maintenance. Flagella glycylation controls sperm motility. Both polyglutamylation and monoglycylation can coexist on the same protein on adjacent residues, and lowering glycylation levels increases polyglutamylation, and reciprocally. Phosphorylated on Ser-172 by CDK1 during the cell cycle, from metaphase to telophase, but not in interphase. This phosphorylation inhibits tubulin incorporation into microtubules.

The protein localises to the cytoplasm. Its subcellular location is the cytoskeleton. Functionally, tubulin is the major constituent of microtubules, a cylinder consisting of laterally associated linear protofilaments composed of alpha- and beta-tubulin heterodimers. Microtubules grow by the addition of GTP-tubulin dimers to the microtubule end, where a stabilizing cap forms. Below the cap, tubulin dimers are in GDP-bound state, owing to GTPase activity of alpha-tubulin. This Homo sapiens (Human) protein is Tubulin beta 8B.